Reading from the N-terminus, the 56-residue chain is Alpha-conotoxin EpI (56 aa).

Positions 1 to 16 (MFTVFLLVVLATTVVS) are cleaved as a signal peptide. The propeptide occupies 17-39 (FTSDRASDSRKDAASGLIALTIK). 2 disulfide bridges follow: cysteine 41/cysteine 47 and cysteine 42/cysteine 55. Residues 43–45 (SDP) are ser-Xaa-Pro motif, crucial for potent interaction with nAChR. Residue tyrosine 54 is modified to Sulfotyrosine. At cysteine 55 the chain carries Cysteine amide.

It belongs to the conotoxin A superfamily. In terms of processing, both tyrosine sulfation and C-terminal amidation are important for activity and structure stability. Expressed by the venom duct.

It is found in the secreted. In terms of biological role, alpha-conotoxins act on postsynaptic membranes, they bind to the nicotinic acetylcholine receptors (nAChR) and thus inhibit them. This native peptide blocks mammalian nicotinic acetylcholine receptors composed of alpha-3-beta-2/CHRNA3-CHRNB2 and alpha-3-beta-4/CHRNA3-CHRNB4 subunits. The chain is Alpha-conotoxin EpI from Conus episcopatus (Bishop's cone).